A 63-amino-acid chain; its full sequence is Cecropin-A1 (63 aa).

The signal sequence occupies residues 1 to 23 (MNFYNIFVFVALILAITIGQSEA). The residue at position 62 (R62) is an Arginine amide.

This sequence belongs to the cecropin family.

It is found in the secreted. In terms of biological role, cecropins have lytic and antibacterial activity against several Gram-positive and Gram-negative bacteria. In Drosophila sechellia (Fruit fly), this protein is Cecropin-A1 (CecA1).